Consider the following 528-residue polypeptide: MSKVAIIDFGSQFTQLLARRIRDLNIYSEIFLPNVAFDLIKGVDAFILSGGPRSVPNSDGIPKIVHDILQFNEKTSIPVLGICYGLQILSNYFESDVVSNCNKEFGKTILNIIKNSKIIENIWESGDQAYVWMSHADSVYNIPRGFEVIAYSVLNNSIAMVANEQRRIYGMQFHPEVYHTPDGINLLANFLDIAGCQKDWTVTSFIDDQQDAIKKQIGNKKVIAALSGGVDSSVAAALTYKAIGDQLHCVFIDNGLLRYNEVEKVKQLFINELKIPVTIVDKSAVFLNRLKSITDPERKRKIIGETFIEIFEEEANKLEGVEFLMQGTIYPDVVESGGSGSIAKESVVIKSHHNVGGLPKTMKFKLVEPLKYLFKDEVRILGRNLGISTEILMRHPFPGPGLAVRIIGEITEEKVKMLQAADDIYINLIKKYELYDVMWQAFVVLLPVKTVGVMGDRRTYGHACVLRAVNSHDGMTAESFPFCMDEETQWKFFKCIQEASNAIINSVNGINRVAYDITSKPPATIEWE.

In terms of domain architecture, Glutamine amidotransferase type-1 spans Lys-3–Asp-199. Cys-83 acts as the Nucleophile in catalysis. Residues His-174 and Glu-176 contribute to the active site. The GMPS ATP-PPase domain occupies Trp-200–Arg-394. An ATP-binding site is contributed by Ser-227–Ser-233.

In terms of assembly, homodimer.

The catalysed reaction is XMP + L-glutamine + ATP + H2O = GMP + L-glutamate + AMP + diphosphate + 2 H(+). Its pathway is purine metabolism; GMP biosynthesis; GMP from XMP (L-Gln route): step 1/1. Functionally, catalyzes the synthesis of GMP from XMP. The chain is GMP synthase [glutamine-hydrolyzing] from Ehrlichia ruminantium (strain Gardel).